The following is a 358-amino-acid chain: Photosystem II protein D1 1 (358 aa).

3 helical membrane-spanning segments follow: residues 28–45 (YVGW…AATI), 117–132 (HFLI…QWEL), and 141–155 (WICV…AAFA). Residue His117 coordinates chlorophyll a. Position 125 (Tyr125) interacts with pheophytin a. The [CaMn4O5] cluster site is built by Asp169 and Glu188. A helical transmembrane segment spans residues 196 to 217 (FHMLGVAGVFGGSLFSAMHGSL). His197 is a chlorophyll a binding site. A quinone is bound by residues His214 and 263-264 (SF). His214 contributes to the Fe cation binding site. His271 serves as a coordination point for Fe cation. The helical transmembrane segment at 273-287 (FLGAWPVIGIWFTSM) threads the bilayer. Positions 331, 332, 341, and 343 each coordinate [CaMn4O5] cluster. Positions 344-358 (AAESTPVALQAPAIG) are excised as a propeptide.

Belongs to the reaction center PufL/M/PsbA/D family. In terms of assembly, PSII is composed of 1 copy each of membrane proteins PsbA, PsbB, PsbC, PsbD, PsbE, PsbF, PsbH, PsbI, PsbJ, PsbK, PsbL, PsbM, PsbT, PsbX, PsbY, PsbZ, Psb30/Ycf12, peripheral proteins PsbO, CyanoQ (PsbQ), PsbU, PsbV and a large number of cofactors. It forms dimeric complexes. It depends on The D1/D2 heterodimer binds P680, chlorophylls that are the primary electron donor of PSII, and subsequent electron acceptors. It shares a non-heme iron and each subunit binds pheophytin, quinone, additional chlorophylls, carotenoids and lipids. D1 provides most of the ligands for the Mn4-Ca-O5 cluster of the oxygen-evolving complex (OEC). There is also a Cl(-1) ion associated with D1 and D2, which is required for oxygen evolution. The PSII complex binds additional chlorophylls, carotenoids and specific lipids. as a cofactor. In terms of processing, tyr-160 forms a radical intermediate that is referred to as redox-active TyrZ, YZ or Y-Z. C-terminally processed by CtpA; processing is essential to allow assembly of the oxygen-evolving complex and thus photosynthetic growth.

It is found in the cellular thylakoid membrane. The enzyme catalyses 2 a plastoquinone + 4 hnu + 2 H2O = 2 a plastoquinol + O2. In terms of biological role, photosystem II (PSII) is a light-driven water:plastoquinone oxidoreductase that uses light energy to abstract electrons from H(2)O, generating O(2) and a proton gradient subsequently used for ATP formation. It consists of a core antenna complex that captures photons, and an electron transfer chain that converts photonic excitation into a charge separation. The D1/D2 (PsbA/PsbD) reaction center heterodimer binds P680, the primary electron donor of PSII as well as several subsequent electron acceptors. The chain is Photosystem II protein D1 1 from Synechococcus sp. (strain CC9902).